Consider the following 676-residue polypeptide: Envelope glycoprotein (676 aa).

The signal sequence occupies residues 1-32 (MGVTGILQLPRDRFKRTSFFLWVIILFQRTFS). Residues 33 to 650 (IPLGVIHNST…NDNWWTGWRQ (618 aa)) lie on the Extracellular side of the membrane. N-linked (GlcNAc...) asparagine; by host glycosylation occurs at N40. Disulfide bonds link C53/C609, C108/C135, C121/C147, C511/C556, and C601/C608. The segment at 54-201 (RDKLSSTNQL…DFFSSHPLRE (148 aa)) is receptor-binding. N-linked (GlcNAc...) asparagine; by host glycosylation is found at N204, N228, N238, N257, N268, N296, N317, N333, N346, N386, and N413. The tract at residues 305–485 (ELSFTAVSNR…SGKLGLITNT (181 aa)) is mucin-like region. Polar residues predominate over residues 314 to 335 (RAKNISGQSPARTSSDPGTNTT). The tract at residues 314-337 (RAKNISGQSPARTSSDPGTNTTTE) is disordered. 2 disordered regions span residues 373-392 (TSLRPPITKPGPDNSTHNTP) and 402-479 (TQVE…SGKL). The span at 414 to 427 (ASTTSDTPPATTAA) shows a compositional bias: low complexity. Residues N436, N454, and N462 are each glycosylated (N-linked (GlcNAc...) asparagine; by host). The span at 447–464 (ATTTSPQNHSETAGNNNT) shows a compositional bias: polar residues. The interval 524–539 (GAAIGLAWIPYFGPAA) is fusion peptide. Positions 554–595 (LICGLRQLANETTQALQLFLRATTELRTFSILNRKAIDFLLQ) form a coiled coil. A glycan (N-linked (GlcNAc...) asparagine; by host) is linked at N563. A coiled-coil region spans residues 615 to 634 (WTKNITDKIDQIIHDFVDKT). The N-linked (GlcNAc...) asparagine; by host glycan is linked to N618. The chain crosses the membrane as a helical span at residues 651–671 (WIPAGIGVTGVIIAVIALFCI). S-palmitoyl cysteine; by host attachment occurs at residues C670 and C672. Residues 672–676 (CKFVF) lie on the Cytoplasmic side of the membrane.

This sequence belongs to the filoviruses glycoprotein family. As to quaternary structure, homotrimer; each monomer consists of a GP1 and a GP2 subunit linked by disulfide bonds. The resulting peplomers (GP1,2) protrude from the virus surface as spikes. Interacts with host integrin alpha-V/ITGAV. Interacts with host CLEC10A. Binds also to host CD209 and CLEC4M/DC-SIGN(R). Interacts with host FOLR1. Interacts with BST2; this interaction inhibits the antiviral effect of BST2 and this allows viral release from infected cells. Interacts with host FCN1; this interaction enhances viral entry. Interacts with host TLR4; this interaction induces cell death in T-lymphocytes or proinflammatory cytokines and SOCS1 production in monocytes. In terms of assembly, interacts with host entry receptor NPC1. GP1 and GP2delta are part of GP1,2delta soluble complexes released by ectodomain shedding. In terms of processing, the signal peptide region modulates GP's high mannose glycosylation, thereby determining the efficiency of the interactions with DC-SIGN(R). Post-translationally, N-glycosylated. O-glycosylated in the mucin-like region. In terms of processing, palmitoylation of GP2 is not required for its function. Post-translationally, specific enzymatic cleavages in vivo yield mature proteins. The precursor is processed into GP1 and GP2 by host cell furin in the trans Golgi, and maybe by other host proteases, to yield the mature GP1 and GP2 proteins. The cleavage site corresponds to the furin optimal cleavage sequence [KR]-X-[KR]-R. This cleavage does not seem to be required for function. After the internalization of the virus into cell endosomes, GP1 C-terminus is removed by the endosomal proteases cathepsin B, cathepsin L, or both, leaving a 19-kDa N-terminal fragment which is further digested by cathepsin B. Proteolytic processing of GP1,2 by host ADAM17 can remove the transmembrane anchor of GP2 and leads to shedding of complexes consisting in GP1 and truncated GP2 (GP1,2delta).

It is found in the virion membrane. The protein localises to the host cell membrane. The protein resides in the secreted. Trimeric GP1,2 complexes form the virion surface spikes and mediate the viral entry processes, with GP1 acting as the receptor-binding subunit and GP2 as the membrane fusion subunit. At later times of infection, down-regulates the expression of various host cell surface molecules that are essential for immune surveillance and cell adhesion. Down-modulates several integrins including ITGA1, ITGA2, ITGA3, ITGA4, ITGA5, ITGA6, ITGAV and ITGB1. This decrease in cell adhesion molecules may lead to cell detachment, contributing to the disruption of blood vessel integrity and hemorrhages developed during infection (cytotoxicity). Interacts with host TLR4 and thereby stimulates the differentiation and activation of monocytes leading to bystander death of T-lymphocytes. Down-regulates as well the function of host natural killer cells. Counteracts the antiviral effect of host BST2/tetherin that restricts release of progeny virions from infected cells. However, cooperates with VP40 and host BST2 to activate canonical NF-kappa-B pathway in a manner dependent on neddylation. In terms of biological role, functions as a decoy for anti-GP1,2 antibodies thereby contributing to viral immune evasion. Interacts and activates host macrophages and dendritic cells inducing up-regulation of cytokine transcription. This effect is mediated throught activation of host TLR4. Functionally, responsible for binding to the receptor(s) on target cells. Interacts with CD209/DC-SIGN and CLEC4M/DC-SIGNR which act as cofactors for virus entry into dendritic cells (DCs) and endothelial cells. Binding to the macrophage specific lectin CLEC10A also seems to enhance virus infectivity. Interaction with FOLR1/folate receptor alpha may be a cofactor for virus entry in some cell types, although results are contradictory. Members of the Tyro3 receptor tyrosine kinase family also seem to be cell entry factors in filovirus infection. Once attached, the virions are internalized through clathrin-dependent endocytosis and/or macropinocytosis. After internalization of the virus into the endosomes of the host cell, proteolysis of GP1 by two cysteine proteases, CTSB/cathepsin B and CTSL/cathepsin L removes the glycan cap and allows GP1 binding to the host entry receptor NPC1. NPC1-binding, Ca(2+) and acidic pH induce a conformational change of GP2, which unmasks its fusion peptide and permit membranes fusion. Its function is as follows. Acts as a class I viral fusion protein. Under the current model, the protein has at least 3 conformational states: pre-fusion native state, pre-hairpin intermediate state, and post-fusion hairpin state. During viral and target cell membrane fusion, the coiled coil regions (heptad repeats) assume a trimer-of-hairpins structure, positioning the fusion peptide in close proximity to the C-terminal region of the ectodomain. The formation of this structure appears to drive apposition and subsequent fusion of viral and target cell membranes. Responsible for penetration of the virus into the cell cytoplasm by mediating the fusion of the membrane of the endocytosed virus particle with the endosomal membrane. Low pH in endosomes induces an irreversible conformational change in GP2, releasing the fusion hydrophobic peptide. The polypeptide is Envelope glycoprotein (GP) (Epomops franqueti (Franquet's epauletted fruit bat)).